The chain runs to 276 residues: Lyso-ornithine lipid O-acyltransferase (276 aa).

A helical membrane pass occupies residues 25-47 (LALRGGAMALVLMAGLTLHLAVR).

This sequence belongs to the 1-acyl-sn-glycerol-3-phosphate acyltransferase family. OlsA subfamily.

Its subcellular location is the membrane. The enzyme catalyses a lyso-ornithine lipid + a fatty acyl-[ACP] = an N(2)-[(3R)-3-(acyloxy)acyl]-L-ornithine lipid + holo-[ACP]. It carries out the reaction a fatty acyl-[ACP] + a 1-acyl-sn-glycero-3-phosphate = a 1,2-diacyl-sn-glycero-3-phosphate + holo-[ACP]. It functions in the pathway lipid metabolism. It participates in phospholipid metabolism. Functionally, catalyzes the second step in the formation of ornithine lipids, which are phosphorus-free membrane lipids. Uses acyl-acyl carrier protein (acyl-AcpP) as an acyl donor and converts lyso-ornithine lipid (LOL) into ornithine lipid (OL). It can also act as an alternate acyl-sn-glycerol-3-phosphate acyltransferase (AGPAT) to ensure glycerophospholipid production. This is Lyso-ornithine lipid O-acyltransferase from Rhodobacter capsulatus (strain ATCC BAA-309 / NBRC 16581 / SB1003).